The chain runs to 657 residues: Autophagy-related protein 22 (657 aa).

The span at 1–15 (MAPNLQPQPQSQLQR) shows a compositional bias: low complexity. Residues 1–78 (MAPNLQPQPQ…VVPRHFGHDA (78 aa)) are disordered. Residues 1 to 91 (MAPNLQPQPQ…SRRELLGWYA (91 aa)) are Cytoplasmic-facing. Polar residues predominate over residues 26–40 (GLSNISKRSFRSCAT). The chain crosses the membrane as a helical span at residues 92 to 112 (YAFAAETYVICGIASFIPILL). Topologically, residues 113–155 (ETLARENGVLVSDRKTPCGSSDSKNDGDGQCIVWVFGMEINTA) are vacuolar. A helical membrane pass occupies residues 156–176 (SFAMYTFSVSVLVQALLVVSI). The Cytoplasmic portion of the chain corresponds to 177–187 (SCAADHGNYRK). A helical transmembrane segment spans residues 188–208 (KLLLTFAWIGSFAVMSYIFIT). Over 209 to 212 (KDNY) the chain is Vacuolar. Residues 213–233 (ILGALLTVISNTSFGASFVLL) form a helical membrane-spanning segment. Residues 234–317 (NSFLPLLVRY…ELELSTRISA (84 aa)) lie on the Cytoplasmic side of the membrane. A helical transmembrane segment spans residues 318-338 (IGIGTGYIAALFLQCICIGVL). Residues 339–349 (ISLHNTTWGQR) lie on the Vacuolar side of the membrane. A glycan (N-linked (GlcNAc...) asparagine) is linked at asparagine 343. The chain crosses the membrane as a helical span at residues 350 to 370 (VVLFMVGVWWTVFTIPAAMWL). Topologically, residues 371-384 (RPRPGPPLADNGRK) are cytoplasmic. Residues 385-405 (GIMAGLAYILYAWKSLFKTIQ) form a helical membrane-spanning segment. Residues 406-409 (QARR) lie on the Vacuolar side of the membrane. A helical transmembrane segment spans residues 410–430 (LLDIVLFLAGWFLLSDAIATT). Residues 431-446 (SSTAILFAKTQLHMKP) lie on the Cytoplasmic side of the membrane. A helical transmembrane segment spans residues 447–467 (WALGMINVISTTAGVFGAFGW). The Vacuolar portion of the chain corresponds to 468-481 (SWVSRLFNLKAHQT). The chain crosses the membrane as a helical span at residues 482 to 502 (ILVCIALFELIPLYGLLGYLP). The Cytoplasmic segment spans residues 503-515 (FVKNWGVFGLQQP). The helical transmembrane segment at 516–536 (WEMYPLAAVYGVVLGGLSGYC) threads the bilayer. Topologically, residues 537–554 (RSLYGELIPPGSEAAFYA) are vacuolar. Residues 555-575 (LYAITDKGSSVFGPTIVGAII) form a helical membrane-spanning segment. Residues 576–583 (DRTGTIRP) lie on the Cytoplasmic side of the membrane. A helical membrane pass occupies residues 584–604 (AFWFLAVLVGFPAPLIWFIDV). At 605–657 (ERGRREGAKLAKSITDSIVQEEDESDDGAERRGMLSDYEREHGQSIDDERAGR) the chain is on the vacuolar side. Residues 615–657 (AKSITDSIVQEEDESDDGAERRGMLSDYEREHGQSIDDERAGR) are disordered. The span at 632–657 (GAERRGMLSDYEREHGQSIDDERAGR) shows a compositional bias: basic and acidic residues.

This sequence belongs to the ATG22 family.

The protein localises to the vacuole membrane. In terms of biological role, vacuolar effluxer which mediate the efflux of leucine and other amino acids resulting from autophagic degradation. The release of autophagic amino acids allows the maintenance of protein synthesis and viability during nitrogen starvation. Autophagy is required for proper vegetative growth, asexual/sexual reproduction, and full virulence. Autophagy is particularly involved in the biosynthesis of deoxynivalenol (DON), an important virulence determinant. The polypeptide is Autophagy-related protein 22 (Gibberella zeae (strain ATCC MYA-4620 / CBS 123657 / FGSC 9075 / NRRL 31084 / PH-1) (Wheat head blight fungus)).